Here is a 438-residue protein sequence, read N- to C-terminus: Serine hydroxymethyltransferase (438 aa).

(6S)-5,6,7,8-tetrahydrofolate is bound by residues Leu133 and 137–139 (GHL). Lys242 carries the post-translational modification N6-(pyridoxal phosphate)lysine.

This sequence belongs to the SHMT family. Homodimer. Requires pyridoxal 5'-phosphate as cofactor.

It is found in the cytoplasm. The catalysed reaction is (6R)-5,10-methylene-5,6,7,8-tetrahydrofolate + glycine + H2O = (6S)-5,6,7,8-tetrahydrofolate + L-serine. It functions in the pathway one-carbon metabolism; tetrahydrofolate interconversion. It participates in amino-acid biosynthesis; glycine biosynthesis; glycine from L-serine: step 1/1. Functionally, catalyzes the reversible interconversion of serine and glycine with tetrahydrofolate (THF) serving as the one-carbon carrier. This reaction serves as the major source of one-carbon groups required for the biosynthesis of purines, thymidylate, methionine, and other important biomolecules. Also exhibits THF-independent aldolase activity toward beta-hydroxyamino acids, producing glycine and aldehydes, via a retro-aldol mechanism. The sequence is that of Serine hydroxymethyltransferase from Brucella abortus (strain S19).